The chain runs to 244 residues: Glutathione S-transferase theta-2 (244 aa).

Residues 2 to 82 (GLELFLDLVS…YLSCKYQTPD (81 aa)) form the GST N-terminal domain. Glutathione is bound by residues 40–41 (HK), 53–54 (KL), 66–67 (ES), and 104–107 (DCIR). The GST C-terminal domain maps to 88–224 (DLQARARVHE…SILEQAAKKT (137 aa)).

Belongs to the GST superfamily. Theta family. Homodimer. As to expression, expressed at low levels in liver. In lung, expressed at low levels in ciliated bronchiolar cells, alveolar macrophages and alveolar type II cells.

Its subcellular location is the cytoplasm. It localises to the cytosol. The protein resides in the nucleus. The catalysed reaction is RX + glutathione = an S-substituted glutathione + a halide anion + H(+). In terms of biological role, conjugation of reduced glutathione to a wide number of exogenous and endogenous hydrophobic electrophiles. Has a sulfatase activity. The chain is Glutathione S-transferase theta-2 (GSTT2) from Homo sapiens (Human).